Consider the following 770-residue polypeptide: Transducin-like enhancer protein 1 (770 aa).

Residues 1–131 (MFPQSRHPTP…IIGQQQLQAQ (131 aa)) are q domain. 2 disordered regions span residues 128 to 157 (LQAQHLSHGHGPPVPLTPHPSGLQPPGIPP) and 176 to 348 (HLAI…PAID). The segment at 132–199 (HLSHGHGPPV…HHRDREPGTS (68 aa)) is GP domain. Basic and acidic residues-rich tracts occupy residues 178 to 196 (AIKDDKKHHDAEHHRDREP) and 209 to 246 (RGTDKRRNGPEFSNDIKKRKVDDKDSSHYDSDGDKSDD). Positions 200–268 (NSLLVPDSLR…SPRASPAHSP (69 aa)) are ccN domain. Residues 225-228 (KKRK) carry the Nuclear localization signal motif. Serine 239 is modified (phosphoserine). Positions 257–266 (PSSPRASPAH) are enriched in low complexity. Residues serine 259, serine 263, and serine 267 each carry the phosphoserine; by CDK1 modification. Residues 267-283 (SPRENGIDKNRLLKKDA) are compositionally biased toward basic and acidic residues. The segment at 269–450 (RENGIDKNRL…GGKPAYSFHV (182 aa)) is SP domain. Over residues 284–298 (SSSPASTASSASSTS) the composition is skewed to low complexity. Serine 286 is modified (phosphoserine). Over residues 300-310 (KSKEMSLHEKA) the composition is skewed to basic and acidic residues. WD repeat units lie at residues 470–501 (GIPRHARQINTLNHGEVVCAVTISNPTRHVYT), 528–558 (NRDNYIRSCKLLPDGCTLIVGGEASTLSIWD), 572–602 (SSAPACYALAISPDSKVCFSCCSDGNIAVWD), 614–644 (GHTDGASCIDISNDGTKLWTGGLDNTVRSWD), 696–726 (LHESCVLSLKFAYCGKWFVSTGKDNLLNAWR), and 737–767 (KESSSVLSCDISVDDKYIVTGSGDKKATVYE).

Belongs to the WD repeat Groucho/TLE family. Homooligomer and heterooligomer with other family members. Binds RUNX1, RUNX3, FOXA2, KDM6A, UTY, histone H3, HESX1, ESRRG and the NF-kappa-B subunit RELA. Interacts with HES1 (via WRPW motif). Binds TCF7, LEF1, TCF7L1 and TCF7L2. Interacts with SIX3. Interacts with EFNB1. Interacts with TLE4. Interacts with FOXG1/BF-1; the interaction is inhibited by TLE6/GRG6. In terms of processing, phosphorylated, probably by CDK1. The degree of phosphorylation varies throughout the cell cycle, and is highest at the G2/M transition. Becomes hyperphosphorylated in response to cell differentiation and interaction with HES1 or RUNX1. Post-translationally, ubiquitinated by XIAP/BIRC4. As to expression, in all tissues examined, mostly in brain, liver and muscle.

Its subcellular location is the nucleus. In terms of biological role, transcriptional corepressor that binds to a number of transcription factors. Inhibits NF-kappa-B-regulated gene expression. Inhibits the transcriptional activation mediated by FOXA2, and by CTNNB1 and TCF family members in Wnt signaling. Enhances FOXG1/BF-1- and HES1-mediated transcriptional repression. The effects of full-length TLE family members may be modulated by association with dominant-negative AES. Unusual function as coactivator for ESRRG. This Homo sapiens (Human) protein is Transducin-like enhancer protein 1 (TLE1).